A 1093-amino-acid polypeptide reads, in one-letter code: Small G protein signaling modulator 1 (1093 aa).

One can recognise an RUN domain in the interval 36 to 190 (HEDSSHIISF…EYTKMKTADH (155 aa)). The segment at 256–297 (LLYGKNNVLVQPRDDMEAVPGYLSLHQTADVMTLKWTPNQLM) is important for interaction with RAB9A and RAB9B. The tract at residues 301–350 (VGDLDYEKSVYWDYAVTIRLEEIVYLHCHQQVDSGGTVVLVSQDGIQRPP) is required for interaction with RAP family members. Disordered stretches follow at residues 377–412 (DPPLWSQRGKGKVFPKLRKRSPQGSSESTSSDKEDD), 645–778 (DSTI…ELAV), and 810–838 (DGAVMDGWPGEADKPSRADSEDNLSEEPE). Over residues 385–397 (GKGKVFPKLRKRS) the composition is skewed to basic residues. The Rab-GAP TBC domain occupies 562–1026 (GVQPEIRRAV…SVWETIWAAK (465 aa)). Polar residues predominate over residues 647-676 (TISNESSQSCSSGRQNLRLQSDSSSSTQVF). Over residues 687 to 696 (AEGRSEEKHP) the composition is skewed to basic and acidic residues. Polar residues predominate over residues 702–736 (NPANGTCSPDSGHPSSHNFSSGLSEHSEPSLSTED). 2 stretches are compositionally biased toward basic and acidic residues: residues 766–776 (TSRDEAPREEL) and 820–829 (EADKPSRADS).

It belongs to the RUTBC family. Interacts with RAB9A (GTP-bound form) and RAB9B. Interacts with RAB3A, RAB4A, RAB5A, RAB8A, RAB11A, RAP1A, RAP1B, RAP2A and RAP2B. No interaction with RAB27A. Expressed only in brain.

It localises to the golgi apparatus. Its subcellular location is the trans-Golgi network. The protein localises to the cytoplasm. The protein resides in the cytoplasmic vesicle membrane. Functionally, interacts with numerous Rab family members, functioning as Rab effector for some, and as GTPase activator for others. Promotes GTP hydrolysis by RAB34 and RAB36. Probably functions as a GTPase effector with RAB9A and RAB9B; does not stimulate GTP hydrolysis with RAB9A and RAB9B. In Mus musculus (Mouse), this protein is Small G protein signaling modulator 1 (Sgsm1).